Reading from the N-terminus, the 378-residue chain is Stimulator of interferon genes protein (378 aa).

Residues 1–17 (MPYSNLHPAIPRPRGHR) are Cytoplasmic-facing. Positions 1–189 (MPYSNLHPAI…MFNQLHNNML (189 aa)) are mediates interaction with ZDHHC1 and ZDHHC11. A helical membrane pass occupies residues 18–34 (SKYVALIFLVASLMILW). A Glycyl lysine isopeptide (Lys-Gly) (interchain with G-Cter in ubiquitin) cross-link involves residue Lys19. The Lumenal segment spans residues 35-44 (VAKDPPNHTL). A helical transmembrane segment spans residues 45–69 (KYLALHLASHELGLLLKNLCCLAEE). Residues 70 to 91 (LCHVQSRYQGSYWKAVRACLGC) lie on the Cytoplasmic side of the membrane. S-palmitoyl cysteine attachment occurs at residues Cys88 and Cys91. A helical membrane pass occupies residues 92 to 106 (PIHCMAMILLSSYFY). Over 107-115 (FLQNTADIY) the chain is Lumenal. The helical transmembrane segment at 116 to 133 (LSWMFGLLVLYKSLSMLL) threads the bilayer. The Cytoplasmic segment spans residues 134-378 (GLQSLTPAEV…QPLPLRTDLI (245 aa)). Residue Lys150 forms a Glycyl lysine isopeptide (Lys-Gly) (interchain with G-Cter in ubiquitin) linkage. The segment at 152 to 339 (LNVAHGLAWS…RHIRQEEKEE (188 aa)) is cyclic dinucleotide-binding domain (CBD). Gly165 contributes to the 3',3'-c-di-GMP binding site. Residue Tyr166 coordinates 2',3'-cUAMP. Tyr166 provides a ligand contact to 3',3'-cGAMP. Residue Lys235 forms a Glycyl lysine isopeptide (Lys-Gly) (interchain with G-Cter in ubiquitin) linkage. Arg237 is a binding site for 2',3'-cUAMP. Position 237 (Arg237) interacts with 3',3'-cGAMP. Arg237 is a binding site for 2',3'-cGAMP. Residues 237 to 240 (RVYS) and Thr262 contribute to the 3',3'-c-di-GMP site. Ser240 bears the Phosphoserine mark. Thr262 lines the 2',3'-cUAMP pocket. A 2',3'-cGAMP-binding site is contributed by Thr262. Residue Lys337 forms a Glycyl lysine isopeptide (Lys-Gly) (interchain with G-Cter in SUMO) linkage. Residues 339-378 (EVTMNAPMTSVAPPPSVLSQEPRLLISGMDQPLPLRTDLI) are C-terminal tail (CTT). Position 354 is a phosphoserine; by MAP3K7 (Ser354). Phosphoserine; by TBK1 occurs at positions 357 and 365. The short motif at 362–365 (LLIS) is the pLxIS motif element.

It belongs to the STING family. In terms of assembly, homodimer; forms a homodimer in absence of cyclic nucleotide (c-di-GMP or cGAMP); 'Lys-63'-linked ubiquitination at Lys-150 is required for homodimerization. Homotetramer; in presence of cyclic nucleotide (c-di-GMP or cGAMP), forms tetramers and higher-order oligomers through side-by-side packing. Interacts (when phosphorylated) with IRF3; following activation and phosphorylation on the pLxIS motif by TBK1, recruits IRF3. Interacts with RIGI, MAVS and SSR2. Interacts with RNF5 and TRIM56. Interacts with TBK1; when homodimer, leading to subsequent production of IFN-beta. Interacts with IFIT1 and IFIT2. Interacts with TRIM29; this interaction induces STING1 ubiquitination and subsequent degradation. Associates with the MHC-II complex. Interacts with STEEP1; interaction takes place upon cGAMP-activation and STING1 phosphorylation by MAP3K7/TAK1 and promotes STING1 translocation to COPII vesicles. Interacts with SEC24A, SEC24B and SEC24C; promoting translocation to COPII vesicles. Interacts (when ubiquitinated) with SQSTM1; leading to relocalization to autophagosomes. Interacts with SURF4. Interacts with HNRNPA2B1. Interacts with ZDHHC1; ZDHHC1 constitutively interacts with STING1 and in presence of DNA viruses activates it by promoting its cGAMP-induced oligomerization and the recruitment of downstream signaling components. Interacts with ZDHHC11; in presence of DNA viruses promotes the recruitment of IRF3 to STING1. Interacts with TOMM70. Interacts with IFI204. Interacts with TAB1; promoting recruitment of TAB1 to the endoplasmic reticulum membrane and subsequent activation of MAP3K7/TAK1. Interacts (via transmembrane domain) with TMEM203. Interacts with DDX41. Post-translationally, phosphorylation by TBK1 leads to activation and production of IFN-beta. Following cyclic nucleotide (c-di-GMP or cGAMP)-binding, activation and translocation from the endoplasmic reticulum, STING1 is phosphorylated by TBK1 at Ser-365 in the pLxIS motif. The phosphorylated pLxIS motif constitutes an IRF3-binding motif, leading to recruitment of the transcription factor IRF3 to induce type-I interferons and other cytokines. The phosphorylated pLxIS motif facilitates SENP2 recruitment during late phase of viral infection. Phosphorylated on tyrosine residues upon MHC-II aggregation. Dephosphorylation by PPP6C leads to inactivation and decreased production of IFN-beta. Phosphorylation at Ser-357 is also required to activate IRF3. Phosphorylation at Ser-354 by MAP3K7/TAK1 facilitates its interaction with STEEP1, promoting STING1 translocation to COPII vesicles. Ubiquitinated. Ubiquitinated via 'Lys-63'-linked ubiquitin chains in response to double-stranded DNA treatment, leading to relocalization to autophagosomes and subsequent degradation; this process is dependent on SQSTM1. 'Lys-63'-linked ubiquitination mediated by TRIM56 at Lys-150 promotes homodimerization and recruitment of the antiviral kinase TBK1 and subsequent production of IFN-beta. 'Lys-48'-linked polyubiquitination at Lys-150 occurring after viral infection is mediated by RNF5 and leads to proteasomal degradation. 'Lys-11'-linked polyubiquitination at Lys-150 by RNF26 leads to stabilize STING1: it protects STING1 from RNF5-mediated 'Lys-48'-linked polyubiquitination. 'Lys-33'-linked and 'Lys-48'-linked deubiquitinated by USP20; leading to its stabilization and promotion of innate antiviral response. 'Lys-48'-linked deubiquitinated by USP44; leading to its stabilization and promotion of innate antiviral response. Deubiquitinated by USP13; leading to inhibition of innate antiviral response. 'Lys-63'-linked deubiquitinated by USP49; leading to inhibition of the subsequent recruitment of TBK1 to the signaling complex. 'Lys-63'-linked ubiquitination mediated by RNF39 promotes the activation of the cGAS-STING pathway. MARCHF5-mediated ubiquitination prevents the oxidation-induced polymer formation. In terms of processing, sumoylated at Lys-337 by TRIM38 during the early phase of viral infection, promoting its stability by preventing its relocalization to autophagosomes and subsequent degradation. Desumoylated by SENP2 during the late phase of viral infection. Post-translationally, palmitoylation takes place in the Golgi apparatus and creates a platform for the recruitment of TBK1. As to expression, present in spleen and thymus tissue. Also present in dendritic cells (at protein level).

It is found in the endoplasmic reticulum membrane. The protein resides in the cytoplasm. The protein localises to the perinuclear region. Its subcellular location is the endoplasmic reticulum-Golgi intermediate compartment membrane. It localises to the golgi apparatus membrane. It is found in the cytoplasmic vesicle. The protein resides in the autophagosome membrane. The protein localises to the mitochondrion outer membrane. Its subcellular location is the cell membrane. It localises to the lysosome membrane. It catalyses the reaction H(+)(in) = H(+)(out). Its activity is regulated as follows. Activated by anticancer drug 5,6-dimethylxanthenone 4-acetic acid (DMXAA). Specifically inhibited by nitrofuran derivatives C-178 and C-176, which covalently bind Cys-91 and prevent palmitoylation and subsequent activation od STING1. In terms of biological role, facilitator of innate immune signaling that acts as a sensor of cytosolic DNA from bacteria and viruses and promotes the production of type I interferon (IFN-alpha and IFN-beta). Innate immune response is triggered in response to non-CpG double-stranded DNA from viruses and bacteria delivered to the cytoplasm. Acts by binding cyclic dinucleotides: recognizes and binds cyclic di-GMP (c-di-GMP), a second messenger produced by bacteria, cyclic UMP-AMP (2',3'-cUAMP), and cyclic GMP-AMP (cGAMP), a messenger produced by CGAS in response to DNA virus in the cytosol. Upon binding to c-di-GMP, cUAMP or cGAMP, STING1 oligomerizes, translocates from the endoplasmic reticulum and is phosphorylated by TBK1 on the pLxIS motif, leading to recruitment and subsequent activation of the transcription factor IRF3 to induce expression of type I interferon and exert a potent anti-viral state. Exhibits 2',3' phosphodiester linkage-specific ligand recognition: can bind both 2'-3' linked cGAMP (2'-3'-cGAMP) and 3'-3' linked cGAMP but is preferentially activated by 2'-3' linked cGAMP. The preference for 2'-3'-cGAMP, compared to other linkage isomers is probably due to the ligand itself, whichs adopts an organized free-ligand conformation that resembles the STING1-bound conformation and pays low energy costs in changing into the active conformation. In addition to promote the production of type I interferons, plays a direct role in autophagy. Following cGAMP-binding, STING1 buds from the endoplasmic reticulum into COPII vesicles, which then form the endoplasmic reticulum-Golgi intermediate compartment (ERGIC). The ERGIC serves as the membrane source for WIPI2 recruitment and LC3 lipidation, leading to formation of autophagosomes that target cytosolic DNA or DNA viruses for degradation by the lysosome. Promotes autophagy by acting as a proton channel that directs proton efflux from the Golgi to facilitate MAP1LC3B/LC3B lipidation. The autophagy- and interferon-inducing activities can be uncoupled and autophagy induction is independent of TBK1 phosphorylation. Autophagy is also triggered upon infection by bacteria: following c-di-GMP-binding, which is produced by live Gram-positive bacteria, promotes reticulophagy. May be involved in translocon function, the translocon possibly being able to influence the induction of type I interferons. May be involved in transduction of apoptotic signals via its association with the major histocompatibility complex class II (MHC-II). This chain is Stimulator of interferon genes protein, found in Mus musculus (Mouse).